Reading from the N-terminus, the 308-residue chain is MWKQDETLEQIVLECKKYTEEGTVASYIPALAKADVSTLGIAIYRGGDEQVIAGDADEKFTLQSISKVIALALALLDVGEEAVFSKVGMEPTGDPFNSISKLETSVPSKPLNPMINAGALAVTNMIIGETTEQSLGRLLSFIHELTKNPTITYNLEVAQSEFDTAFLNRSLSYFLKQHGVIQADVEQLLDLYTKQCAIEMCCSDLARIGYVFANEGRDPDTGQRIVPLHVARIIKTFMVTCGMYNASGEFAIRVGIPAKSGVSGAILALVPNKYGIAVYSPALDEKGNSLAGIKLLETLSCREEWSIF.

Residues serine 64, asparagine 116, glutamate 161, asparagine 168, tyrosine 192, tyrosine 244, and valine 262 each contribute to the substrate site.

This sequence belongs to the glutaminase family. Homotetramer.

It carries out the reaction L-glutamine + H2O = L-glutamate + NH4(+). The chain is Glutaminase 1 from Halalkalibacterium halodurans (strain ATCC BAA-125 / DSM 18197 / FERM 7344 / JCM 9153 / C-125) (Bacillus halodurans).